A 100-amino-acid chain; its full sequence is Nucleoid-associated protein jhp_0031 (100 aa).

This sequence belongs to the YbaB/EbfC family. In terms of assembly, homodimer.

Its subcellular location is the cytoplasm. The protein localises to the nucleoid. Binds to DNA and alters its conformation. May be involved in regulation of gene expression, nucleoid organization and DNA protection. The protein is Nucleoid-associated protein jhp_0031 of Helicobacter pylori (strain J99 / ATCC 700824) (Campylobacter pylori J99).